The chain runs to 86 residues: Small ribosomal subunit protein bS18c (86 aa).

The protein belongs to the bacterial ribosomal protein bS18 family. As to quaternary structure, part of the 30S ribosomal subunit.

It is found in the plastid. Its subcellular location is the chloroplast. The polypeptide is Small ribosomal subunit protein bS18c (Pseudotsuga menziesii (Douglas-fir)).